Consider the following 427-residue polypeptide: Lipophilic envelope-spanning tunnel protein A (427 aa).

The Cytoplasmic segment spans residues 1 to 75 (MALNTPQITP…LTRLAAMAFT (75 aa)). A helical membrane pass occupies residues 76-96 (MLLLMPFAWGEPLLHIWLLGI). Residues 97 to 120 (RIDANVMQGIWQMTKQGDAITGSM) are Periplasmic-facing. A helical transmembrane segment spans residues 121–141 (VFFCVIGAPLILVTSIAYLWF). Residues 142-269 (GNRLGMNLRP…RHSLQKCWAA (128 aa)) lie on the Cytoplasmic side of the membrane. A helical transmembrane segment spans residues 270 to 290 (LLASIVLLLPANLLPISIIYL). Residues 291-310 (NGGRQEDTILSGIMSLASSN) are Periplasmic-facing. The chain crosses the membrane as a helical span at residues 311–331 (IAVAGIVFIASILVPFTKVIV). The Cytoplasmic segment spans residues 332 to 350 (MFTLLLSIHFKCQQGLRTR). Residues 351-371 (ILLLRMVTWIGRWSMLDLFVI) form a helical membrane-spanning segment. Residues 372-382 (SLTMSLINRDQ) are Periplasmic-facing. Residues 383–403 (ILAFTMGPAAFYFGAAVILTI) traverse the membrane as a helical segment. At 404-427 (LAVEWLDSRLLWDAHESGNARFDD) the chain is on the cytoplasmic side.

The protein belongs to the PqiA family. May interact with LetB in the inner membrane.

Its subcellular location is the cell inner membrane. Its function is as follows. Could be part, together with LetB, of a system that transports lipids between the inner membrane and the outer membrane. Contributes to membrane integrity. The protein is Lipophilic envelope-spanning tunnel protein A of Escherichia coli (strain K12).